The primary structure comprises 584 residues: Aspartate--tRNA ligase (584 aa).

Glutamate 169 provides a ligand contact to L-aspartate. Residues 193–196 (QLFK) form an aspartate region. Arginine 215 contacts L-aspartate. ATP-binding positions include 215-217 (RDE) and glutamine 224. Histidine 446 is a binding site for L-aspartate. Residue glutamate 480 coordinates ATP. Arginine 487 is an L-aspartate binding site. 532–535 (GLDR) lines the ATP pocket.

It belongs to the class-II aminoacyl-tRNA synthetase family. Type 1 subfamily. In terms of assembly, homodimer.

It localises to the cytoplasm. It carries out the reaction tRNA(Asp) + L-aspartate + ATP = L-aspartyl-tRNA(Asp) + AMP + diphosphate. Its function is as follows. Catalyzes the attachment of L-aspartate to tRNA(Asp) in a two-step reaction: L-aspartate is first activated by ATP to form Asp-AMP and then transferred to the acceptor end of tRNA(Asp). This is Aspartate--tRNA ligase from Buchnera aphidicola subsp. Schizaphis graminum (strain Sg).